We begin with the raw amino-acid sequence, 28 residues long: Small integral membrane protein 47 (28 aa).

Residues 7-24 (VTLAMALFTILTSIYFFN) traverse the membrane as a helical segment.

Its subcellular location is the membrane. The polypeptide is Small integral membrane protein 47 (Homo sapiens (Human)).